The following is a 249-amino-acid chain: Vitamin B12 import ATP-binding protein BtuD (249 aa).

The ABC transporter domain maps to 1–233 (MSIVMQLQDV…PNLAQAYGMN (233 aa)). 33-40 (GPNGAGKS) is an ATP binding site.

The protein belongs to the ABC transporter superfamily. Vitamin B12 importer (TC 3.A.1.13.1) family. In terms of assembly, the complex is composed of two ATP-binding proteins (BtuD), two transmembrane proteins (BtuC) and a solute-binding protein (BtuF).

It is found in the cell inner membrane. It carries out the reaction an R-cob(III)alamin(out) + ATP + H2O = an R-cob(III)alamin(in) + ADP + phosphate + H(+). Its function is as follows. Part of the ABC transporter complex BtuCDF involved in vitamin B12 import. Responsible for energy coupling to the transport system. The sequence is that of Vitamin B12 import ATP-binding protein BtuD from Escherichia coli (strain K12 / DH10B).